A 363-amino-acid polypeptide reads, in one-letter code: Inositol-3-phosphate synthase (363 aa).

An Isoglutamyl lysine isopeptide (Lys-Gln) (interchain with Q-Cter in protein Pup) cross-link involves residue lysine 65. Residues aspartate 70, alanine 129, tyrosine 149, serine 192, aspartate 227, and lysine 240 each contribute to the NAD(+) site.

It belongs to the myo-inositol 1-phosphate synthase family. It depends on NAD(+) as a cofactor. Pupylated at Lys-65 by the prokaryotic ubiquitin-like protein Pup, which leads to its degradation by the proteasome.

It catalyses the reaction D-glucose 6-phosphate = 1D-myo-inositol 3-phosphate. Functionally, key enzyme in myo-inositol biosynthesis pathway that catalyzes the conversion of glucose 6-phosphate to 1D-myo-inositol 3-phosphate in a NAD-dependent manner. This is Inositol-3-phosphate synthase (ino1) from Mycolicibacterium smegmatis (strain ATCC 700084 / mc(2)155) (Mycobacterium smegmatis).